The primary structure comprises 219 residues: MRLILISHSRLFALSALFLIPTFDSLSAENTLTDSTTLIDRTTQSDSTTQRDSKTRRDPAPSFWQRASNNLSETWQHPQSQDLYVPAITWHNRWTYDRAKTDKYNERPWGAGFGVSRLDSDGDWHALYVMAFKDSFNKWEPIGGYGYEKRWRPLENQDIQFGLGFTAGVTMRDNWHYIPIPVLLPLASVSYQRLSFQATYIPGTYNNGNVFFAWLRWQF.

Residues 1–28 form the signal peptide; the sequence is MRLILISHSRLFALSALFLIPTFDSLSA. Residues 39–63 form a disordered region; it reads IDRTTQSDSTTQRDSKTRRDPAPSF. Residues 49–59 show a composition bias toward basic and acidic residues; the sequence is TQRDSKTRRDP. Catalysis depends on residues His-91, Asp-134, and Ser-135.

This sequence belongs to the lipid A palmitoyltransferase family. Homodimer.

The protein localises to the cell outer membrane. The catalysed reaction is a lipid A + a 1,2-diacyl-sn-glycero-3-phosphocholine = a hepta-acyl lipid A + a 2-acyl-sn-glycero-3-phosphocholine. The enzyme catalyses a lipid IVA + a 1,2-diacyl-sn-glycero-3-phosphocholine = a lipid IVB + a 2-acyl-sn-glycero-3-phosphocholine. It carries out the reaction a lipid IIA + a 1,2-diacyl-sn-glycero-3-phosphocholine = a lipid IIB + a 2-acyl-sn-glycero-3-phosphocholine. In terms of biological role, transfers a fatty acid residue from the sn-1 position of a phospholipid to the N-linked hydroxyfatty acid chain on the proximal unit of lipid A or its precursors. This Dickeya zeae (strain Ech586) (Dickeya dadantii (strain Ech586)) protein is Lipid A acyltransferase PagP.